The primary structure comprises 129 residues: MDRNINFSPVFIEPRFKHEFLLSPQRYFYILVFEVIVALIILNFFFKEEILYTFFPLAKPSKNSINSLLDRTMLKCEEDGSLMISRPSGIYSALSLDGSPVRISDCSLLLSSINGASSSTSPYSIFNRR.

A helical; Signal-anchor for type III membrane protein transmembrane segment spans residues 27 to 47 (YFYILVFEVIVALIILNFFFK). The cysteines at positions 76 and 106 are disulfide-linked.

The protein belongs to the chordopoxvirinae L5 family. Part of a stable entry-fusion complex (EFC) which is at least composed of proteins A16, A21, A28, G3, G9, H2, J5, and L5. Formation of the viral membrane is necessary for the assembly of the complex. Interacts with G3. In terms of processing, most cysteines are linked by disulfide bonds. They are created by the viral disulfide bond formation pathway, a poxvirus-specific redox pathway that operates on the cytoplasmic side of the MV membranes.

Its subcellular location is the virion membrane. Envelope protein part of the entry-fusion complex responsible for the virus membrane fusion with host cell membrane during virus entry. Also plays a role in cell-cell fusion (syncytium formation). The chain is L5 homolog from Fowlpox virus (strain NVSL) (FPV).